We begin with the raw amino-acid sequence, 95 residues long: Sec-independent protein translocase protein TatA (95 aa).

A helical transmembrane segment spans residues 1–21 (MFGRLGAPEIILILVVIILLF). Positions 44–55 (AKAMKSEAKADD) are enriched in basic and acidic residues. Residues 44–95 (AKAMKSEAKADDAAPADPPNPEQSAAQRTIQAAPGDVTSSRPVTEPTDTTKR) are disordered.

This sequence belongs to the TatA/E family. As to quaternary structure, the Tat system comprises two distinct complexes: a TatABC complex, containing multiple copies of TatA, TatB and TatC subunits, and a separate TatA complex, containing only TatA subunits. Substrates initially bind to the TatABC complex, which probably triggers association of the separate TatA complex to form the active translocon.

Its subcellular location is the cell membrane. Part of the twin-arginine translocation (Tat) system that transports large folded proteins containing a characteristic twin-arginine motif in their signal peptide across membranes. TatA could form the protein-conducting channel of the Tat system. The protein is Sec-independent protein translocase protein TatA of Streptomyces coelicolor (strain ATCC BAA-471 / A3(2) / M145).